A 177-amino-acid polypeptide reads, in one-letter code: Small ribosomal subunit protein uS5 (177 aa).

An S5 DRBM domain is found at 19–82 (FIEKLVAIKR…DQAQKQMIKV (64 aa)).

The protein belongs to the universal ribosomal protein uS5 family. Part of the 30S ribosomal subunit. Contacts proteins S4 and S8.

In terms of biological role, with S4 and S12 plays an important role in translational accuracy. Functionally, located at the back of the 30S subunit body where it stabilizes the conformation of the head with respect to the body. This is Small ribosomal subunit protein uS5 from Magnetococcus marinus (strain ATCC BAA-1437 / JCM 17883 / MC-1).